Reading from the N-terminus, the 530-residue chain is Amidase FVEG_08295 (530 aa).

Active-site charge relay system residues include Lys-138 and Ser-214. Substrate is bound by residues Ser-214 and 235-238; that span reads IAGS. Ser-238 (acyl-ester intermediate) is an active-site residue.

It belongs to the amidase family.

The enzyme catalyses a monocarboxylic acid amide + H2O = a monocarboxylate + NH4(+). Its pathway is xenobiotic degradation. Functionally, amidase; part of the Fusarium detoxification of benzoxazolinone cluster 1 (FDB1) involved in the degradation of benzoxazolinones produced by the host plant. Maize, wheat, and rye produce the 2 benzoxazinone phytoanticipins 2,4-dihy-droxy-7-methoxy-1,4-benzoxazin-3-one (DIMBOA) and 2,4-dihydroxy-1,4-benzoxazin-3-one (DIBOA) that, due to their inherent instability once released, spontaneously degrade to the more stable corresponding benzoxazolinones, 6-methoxy-2-benzoxazolinone (MBOA) and 2-benzoxazolinone (BOA), respectively. The first step in the detoxification of benzoxazolinones involves the hydrolysis of the cyclic ester bond of benzoxazolinones by the FDB1 cluster gamma-lactamase MBL1 to aminophenols. MBL1 is able to convert BOA into 2-aminophenol (2-AP), as well as MBOA into 5-methoxy-2-aminophenol (2-AMP). The FDB2 cluster N-malonyltransferase FDB2/NAT1 then metabolizes aminophenols via N-malonylation to non-toxic malonamic acids. FDB2/NAT1 converts 2-AP into N-(2-hydroxyphenyl) malonamic acid (HPMA) and 2-AMP into N-(2-hydroxy-4-methoxyphenyl) malonamic acid (HMPMA). The duplicated dienlactone hydrolases DLH1 and DLH2 may provide redundant function for hydrolyzing the lactone moiety in the BOA molecule. The roles of the amidases an other enzymes encoded by the 2 FDB clusters have not been identified so far. The protein is Amidase FVEG_08295 of Gibberella moniliformis (strain M3125 / FGSC 7600) (Maize ear and stalk rot fungus).